Consider the following 615-residue polypeptide: DNA mismatch repair protein MutL (615 aa).

The disordered stretch occupies residues 362-397 (HFAEPAVREPVAPRYSPAPASGSRPAASWPNAQPGY). The span at 373–391 (APRYSPAPASGSRPAASWP) shows a compositional bias: low complexity.

It belongs to the DNA mismatch repair MutL/HexB family.

In terms of biological role, this protein is involved in the repair of mismatches in DNA. It is required for dam-dependent methyl-directed DNA mismatch repair. May act as a 'molecular matchmaker', a protein that promotes the formation of a stable complex between two or more DNA-binding proteins in an ATP-dependent manner without itself being part of a final effector complex. The chain is DNA mismatch repair protein MutL from Escherichia coli O6:H1 (strain CFT073 / ATCC 700928 / UPEC).